The following is a 132-amino-acid chain: Small ribosomal subunit protein uS8c (132 aa).

It belongs to the universal ribosomal protein uS8 family. In terms of assembly, part of the 30S ribosomal subunit.

Its subcellular location is the plastid. The protein localises to the chloroplast. In terms of biological role, one of the primary rRNA binding proteins, it binds directly to 16S rRNA central domain where it helps coordinate assembly of the platform of the 30S subunit. In Thalassiosira pseudonana (Marine diatom), this protein is Small ribosomal subunit protein uS8c (rps8).